A 217-amino-acid chain; its full sequence is tRNA (guanine-N(7)-)-methyltransferase (217 aa).

Positions 43, 68, 101, and 123 each coordinate S-adenosyl-L-methionine. Lysine 127 contacts substrate. An interaction with RNA region spans residues 129 to 134 (RHNKRR). Residues aspartate 159 and 196 to 199 (TEYE) each bind substrate.

This sequence belongs to the class I-like SAM-binding methyltransferase superfamily. TrmB family.

The catalysed reaction is guanosine(46) in tRNA + S-adenosyl-L-methionine = N(7)-methylguanosine(46) in tRNA + S-adenosyl-L-homocysteine. It participates in tRNA modification; N(7)-methylguanine-tRNA biosynthesis. Functionally, catalyzes the formation of N(7)-methylguanine at position 46 (m7G46) in tRNA. This is tRNA (guanine-N(7)-)-methyltransferase from Clostridium botulinum (strain 657 / Type Ba4).